A 396-amino-acid chain; its full sequence is Pyridinium-3,5-bisthiocarboxylic acid mononucleotide nickel insertion protein (396 aa).

This sequence belongs to the LarC family.

The enzyme catalyses Ni(II)-pyridinium-3,5-bisthiocarboxylate mononucleotide = pyridinium-3,5-bisthiocarboxylate mononucleotide + Ni(2+). Involved in the biosynthesis of a nickel-pincer cofactor ((SCS)Ni(II) pincer complex). Binds Ni(2+), and functions in nickel delivery to pyridinium-3,5-bisthiocarboxylic acid mononucleotide (P2TMN), to form the mature cofactor. Is thus probably required for the activation of nickel-pincer cofactor-dependent enzymes. The protein is Pyridinium-3,5-bisthiocarboxylic acid mononucleotide nickel insertion protein of Moorella thermoacetica (strain ATCC 39073 / JCM 9320).